We begin with the raw amino-acid sequence, 256 residues long: Alcohol dehydrogenase (256 aa).

Position 12–35 (12–35 (FVAGLGGIGLDTSKELVKRDLKNL)) interacts with NAD(+). Residue Ser140 coordinates substrate. Tyr153 acts as the Proton acceptor in catalysis.

The protein belongs to the short-chain dehydrogenases/reductases (SDR) family. Homodimer.

It catalyses the reaction a primary alcohol + NAD(+) = an aldehyde + NADH + H(+). The enzyme catalyses a secondary alcohol + NAD(+) = a ketone + NADH + H(+). This Drosophila teissieri (Fruit fly) protein is Alcohol dehydrogenase (Adh).